We begin with the raw amino-acid sequence, 101 residues long: UPF0473 protein EF_1204 (101 aa).

It belongs to the UPF0473 family.

The polypeptide is UPF0473 protein EF_1204 (Enterococcus faecalis (strain ATCC 700802 / V583)).